A 64-amino-acid chain; its full sequence is SPbeta prophage-derived uncharacterized protein YoqI (64 aa).

The sequence is that of SPbeta prophage-derived uncharacterized protein YoqI (yoqI) from Bacillus subtilis (strain 168).